The sequence spans 382 residues: Queuine tRNA-ribosyltransferase (382 aa).

The Proton acceptor role is filled by D93. Residues 93–97 (DSGGF), D147, Q191, and G218 each bind substrate. An RNA binding region spans residues 249–255 (GVGKPED). D268 functions as the Nucleophile in the catalytic mechanism. Residues 273–277 (TRNAR) are RNA binding; important for wobble base 34 recognition. C306, C308, C311, and H337 together coordinate Zn(2+).

The protein belongs to the queuine tRNA-ribosyltransferase family. As to quaternary structure, homodimer. Within each dimer, one monomer is responsible for RNA recognition and catalysis, while the other monomer binds to the replacement base PreQ1. Requires Zn(2+) as cofactor.

The catalysed reaction is 7-aminomethyl-7-carbaguanine + guanosine(34) in tRNA = 7-aminomethyl-7-carbaguanosine(34) in tRNA + guanine. Its pathway is tRNA modification; tRNA-queuosine biosynthesis. Functionally, catalyzes the base-exchange of a guanine (G) residue with the queuine precursor 7-aminomethyl-7-deazaguanine (PreQ1) at position 34 (anticodon wobble position) in tRNAs with GU(N) anticodons (tRNA-Asp, -Asn, -His and -Tyr). Catalysis occurs through a double-displacement mechanism. The nucleophile active site attacks the C1' of nucleotide 34 to detach the guanine base from the RNA, forming a covalent enzyme-RNA intermediate. The proton acceptor active site deprotonates the incoming PreQ1, allowing a nucleophilic attack on the C1' of the ribose to form the product. After dissociation, two additional enzymatic reactions on the tRNA convert PreQ1 to queuine (Q), resulting in the hypermodified nucleoside queuosine (7-(((4,5-cis-dihydroxy-2-cyclopenten-1-yl)amino)methyl)-7-deazaguanosine). This chain is Queuine tRNA-ribosyltransferase, found in Haemophilus influenzae (strain 86-028NP).